We begin with the raw amino-acid sequence, 146 residues long: Prolactin-inducible protein homolog (146 aa).

The N-terminal stretch at 1 to 28 (MRLLQLLFRASPATLLLVLCLQLGANKA) is a signal peptide. A Pyrrolidone carboxylic acid modification is found at Q29. Intrachain disulfides connect C65–C91 and C89–C123. An N-linked (GlcNAc...) asparagine glycan is attached at N105.

Belongs to the PIP family. As to quaternary structure, monomer. Interacts with AZGP1.

It is found in the secreted. This chain is Prolactin-inducible protein homolog (PIP), found in Hylobates agilis (Agile gibbon).